Reading from the N-terminus, the 258-residue chain is Acetylglutamate kinase (258 aa).

Residues 44 to 45, Arg-66, and Asn-158 each bind substrate; that span reads GG. ATP is bound by residues 181–186 and 209–211; these read DISSIL and IIT.

This sequence belongs to the acetylglutamate kinase family. ArgB subfamily. Homodimer.

The protein resides in the cytoplasm. The catalysed reaction is N-acetyl-L-glutamate + ATP = N-acetyl-L-glutamyl 5-phosphate + ADP. It participates in amino-acid biosynthesis; L-arginine biosynthesis; N(2)-acetyl-L-ornithine from L-glutamate: step 2/4. Catalyzes the ATP-dependent phosphorylation of N-acetyl-L-glutamate. This Buchnera aphidicola subsp. Schizaphis graminum (strain Sg) protein is Acetylglutamate kinase.